A 562-amino-acid chain; its full sequence is Cytosolic invertase 1 (562 aa).

This sequence belongs to the glycosyl hydrolase 100 family.

The protein resides in the cytoplasm. Its subcellular location is the cytosol. It carries out the reaction Hydrolysis of terminal non-reducing beta-D-fructofuranoside residues in beta-D-fructofuranosides.. Cytosolic invertase that cleaves sucrose into glucose and fructose and is involved in the regulation of primary root elongation, lateral root formation, floral transition and pollen development. The protein is Cytosolic invertase 1 of Oryza sativa subsp. japonica (Rice).